The chain runs to 74 residues: Exodeoxyribonuclease 7 small subunit (74 aa).

The protein belongs to the XseB family. As to quaternary structure, heterooligomer composed of large and small subunits.

Its subcellular location is the cytoplasm. The enzyme catalyses Exonucleolytic cleavage in either 5'- to 3'- or 3'- to 5'-direction to yield nucleoside 5'-phosphates.. In terms of biological role, bidirectionally degrades single-stranded DNA into large acid-insoluble oligonucleotides, which are then degraded further into small acid-soluble oligonucleotides. The polypeptide is Exodeoxyribonuclease 7 small subunit (Bdellovibrio bacteriovorus (strain ATCC 15356 / DSM 50701 / NCIMB 9529 / HD100)).